The sequence spans 81 residues: ATP synthase subunit c, chloroplastic (81 aa).

A run of 2 helical transmembrane segments spans residues 3 to 23 (PLISAASVIAAGLAVGLASIG) and 57 to 77 (LAFMEALTIYGLVVALALLFA).

This sequence belongs to the ATPase C chain family. F-type ATPases have 2 components, F(1) - the catalytic core - and F(0) - the membrane proton channel. F(1) has five subunits: alpha(3), beta(3), gamma(1), delta(1), epsilon(1). F(0) has four main subunits: a(1), b(1), b'(1) and c(10-14). The alpha and beta chains form an alternating ring which encloses part of the gamma chain. F(1) is attached to F(0) by a central stalk formed by the gamma and epsilon chains, while a peripheral stalk is formed by the delta, b and b' chains.

The protein localises to the plastid. It is found in the chloroplast thylakoid membrane. Its function is as follows. F(1)F(0) ATP synthase produces ATP from ADP in the presence of a proton or sodium gradient. F-type ATPases consist of two structural domains, F(1) containing the extramembraneous catalytic core and F(0) containing the membrane proton channel, linked together by a central stalk and a peripheral stalk. During catalysis, ATP synthesis in the catalytic domain of F(1) is coupled via a rotary mechanism of the central stalk subunits to proton translocation. In terms of biological role, key component of the F(0) channel; it plays a direct role in translocation across the membrane. A homomeric c-ring of between 10-14 subunits forms the central stalk rotor element with the F(1) delta and epsilon subunits. In Ipomoea purpurea (Common morning glory), this protein is ATP synthase subunit c, chloroplastic.